The primary structure comprises 293 residues: Homoserine kinase (293 aa).

Residue 83 to 93 (PITRGMGSSSA) coordinates ATP.

It belongs to the GHMP kinase family. Homoserine kinase subfamily.

The protein localises to the cytoplasm. It carries out the reaction L-homoserine + ATP = O-phospho-L-homoserine + ADP + H(+). Its pathway is amino-acid biosynthesis; L-threonine biosynthesis; L-threonine from L-aspartate: step 4/5. Its function is as follows. Catalyzes the ATP-dependent phosphorylation of L-homoserine to L-homoserine phosphate. This Helicobacter pylori (strain ATCC 700392 / 26695) (Campylobacter pylori) protein is Homoserine kinase.